We begin with the raw amino-acid sequence, 415 residues long: Corticotropin-releasing factor receptor 1 (415 aa).

Residues 1 to 24 (MLLAKTPCLLLVQVIAAGISFALT) form the signal peptide. The Extracellular segment spans residues 25 to 111 (SLQDQCETLQ…CQEILKQEKK (87 aa)). 3 disulfide bridges follow: Cys30–Cys54, Cys44–Cys87, and Cys68–Cys102. N-linked (GlcNAc...) asparagine glycosylation is found at Asn38, Asn45, Asn78, and Asn90. The helical transmembrane segment at 112-142 (TKVHYHIAIVINFLGHSISLCALLVAFILFL) threads the bilayer. Over 143-149 (RLRSIRC) the chain is Cytoplasmic. The chain crosses the membrane as a helical span at residues 150–174 (LRNIIHWNLITAFILRNVTWFVMQL). Over 175 to 189 (TLSHEAHDSNVVWCR) the chain is Extracellular. An intrachain disulfide couples Cys188 to Cys258. Residues 190 to 218 (LVTIAHNYFYVTNFFWMFGEGCYLHTAIV) traverse the membrane as a helical segment. The Cytoplasmic segment spans residues 219-225 (LTYSTDK). The chain crosses the membrane as a helical span at residues 226–253 (LRKWMFICIGWCIPFPIIVAWAIGKLYY). Over 254–269 (DNEKCWFGKKAGVYTD) the chain is Extracellular. A helical transmembrane segment spans residues 270–295 (FIYQGPVILVLLINFIFLFNIVRILM). Residues 296-306 (TKLRASTTSET) are Cytoplasmic-facing. Residues 307 to 331 (IQYRKAVKATLVLLPLLGITYMLFF) traverse the membrane as a helical segment. Topologically, residues 332–338 (VTPGEDE) are extracellular. The helical transmembrane segment at 339–368 (ISRIVFIYFNSFLQSFQGFFVSVFYCFLNS) threads the bilayer. At 369–415 (EVRSAVRKRWHRWQDKHSIRARVARAMSIPTSPTRISFHSIKQSSAI) the chain is on the cytoplasmic side.

Belongs to the G-protein coupled receptor 2 family. As to quaternary structure, interacts (via N-terminal extracellular domain) with CRF and UCN.

It localises to the cell membrane. Functionally, G-protein coupled receptor for CRH (corticotropin-releasing factor) and UCN (urocortin). Has high affinity for CRH and UCN. Ligand binding causes a conformation change that triggers signaling via guanine nucleotide-binding proteins (G proteins) and down-stream effectors, such as adenylate cyclase. Promotes the activation of adenylate cyclase, leading to increased intracellular cAMP levels. The sequence is that of Corticotropin-releasing factor receptor 1 (crhr1) from Xenopus laevis (African clawed frog).